We begin with the raw amino-acid sequence, 312 residues long: Malate dehydrogenase (312 aa).

NAD(+)-binding positions include Gly7–Gly13 and Asp34. The substrate site is built by Arg81 and Arg87. Residues Asn94 and Ile117–Asn119 contribute to the NAD(+) site. The substrate site is built by Asn119 and Arg153. His177 acts as the Proton acceptor in catalysis. Met228 provides a ligand contact to NAD(+).

It belongs to the LDH/MDH superfamily. MDH type 1 family. As to quaternary structure, homodimer.

The catalysed reaction is (S)-malate + NAD(+) = oxaloacetate + NADH + H(+). In terms of biological role, catalyzes the reversible oxidation of malate to oxaloacetate. In Mannheimia succiniciproducens (strain KCTC 0769BP / MBEL55E), this protein is Malate dehydrogenase.